Consider the following 248-residue polypeptide: tRNA (guanine-N(1)-)-methyltransferase (248 aa).

S-adenosyl-L-methionine is bound by residues Gly126 and 150 to 155; that span reads LGDYVL. Positions 224–248 are disordered; that stretch reads WRRTQQEERTRERRPDLWAAFDSED. Positions 227-239 are enriched in basic and acidic residues; it reads TQQEERTRERRPD.

Belongs to the RNA methyltransferase TrmD family. In terms of assembly, homodimer.

The protein resides in the cytoplasm. The enzyme catalyses guanosine(37) in tRNA + S-adenosyl-L-methionine = N(1)-methylguanosine(37) in tRNA + S-adenosyl-L-homocysteine + H(+). In terms of biological role, specifically methylates guanosine-37 in various tRNAs. This is tRNA (guanine-N(1)-)-methyltransferase from Micrococcus luteus (strain ATCC 4698 / DSM 20030 / JCM 1464 / CCM 169 / CCUG 5858 / IAM 1056 / NBRC 3333 / NCIMB 9278 / NCTC 2665 / VKM Ac-2230) (Micrococcus lysodeikticus).